Here is a 615-residue protein sequence, read N- to C-terminus: MAQASGMDPLVDIEDERPKWDNKLQYLLSCIGFAVGLGNIWRFPYLCQTHGGGAFLIPYFIALVFEGIPLFYIELAIGQRLRRGSIGVWKTISPYLGGVGLGCFSVSFLVSLYYNTVLLWVLWFFLNSFQHPLPWSTCPLDLNRTGFVQECQSSGTVSYFWYRQTLNITSDISNTGTIQWKLFLCLVACWSTVYLCVIRGIESTGKVIYFTALFPYLVLTIFLIRGLTLPGATEGLIYLFTPNMKTLQNPRVWLDAATQIFFSLSLAFGGHIAFASYNPPRNNCEKDAVIIALVNSMTSLYASIAIFSVMGFKASNDYGRCLDRNILSLINEFDLPELSISRDEYPSVLMYLNATQTARVAQLPLKTCHLEDFLDKSASGPGLAFIVFTEAVLHMPGASVWSVLFFGMLFTLGLSSMFGNMEGVITPLLDMGILPKGIPKEVMTGVICFACFLSAICFTLQSGGYWLEIFDSFAASLNLIIFAFMEVVGVIHIYGMKRFCDDIEWMTGRRPGLYWQVTWRVVSPMLLFGIFLSYIVLLIQTPPSYKAWNPQYEHFPSREEKFYPGWVQVTCVLLSFLPSLWVPGVALAQLLSQYKQRWKATHLESGLKLQESRGC.

The Cytoplasmic segment spans residues 1 to 26 (MAQASGMDPLVDIEDERPKWDNKLQY). A helical membrane pass occupies residues 27 to 47 (LLSCIGFAVGLGNIWRFPYLC). The Extracellular portion of the chain corresponds to 48 to 52 (QTHGG). A helical membrane pass occupies residues 53 to 73 (GAFLIPYFIALVFEGIPLFYI). The Cytoplasmic portion of the chain corresponds to 74-105 (ELAIGQRLRRGSIGVWKTISPYLGGVGLGCFS). Residues 106–126 (VSFLVSLYYNTVLLWVLWFFL) form a helical membrane-spanning segment. The Extracellular portion of the chain corresponds to 127-177 (NSFQHPLPWSTCPLDLNRTGFVQECQSSGTVSYFWYRQTLNITSDISNTGT). Asn-143 and Asn-167 each carry an N-linked (GlcNAc...) asparagine glycan. A helical membrane pass occupies residues 178–198 (IQWKLFLCLVACWSTVYLCVI). At 199–206 (RGIESTGK) the chain is on the cytoplasmic side. The helical transmembrane segment at 207-227 (VIYFTALFPYLVLTIFLIRGL) threads the bilayer. The Extracellular portion of the chain corresponds to 228 to 255 (TLPGATEGLIYLFTPNMKTLQNPRVWLD). A helical membrane pass occupies residues 256–276 (AATQIFFSLSLAFGGHIAFAS). Residues 277-288 (YNPPRNNCEKDA) are Cytoplasmic-facing. Residues 289 to 309 (VIIALVNSMTSLYASIAIFSV) form a helical membrane-spanning segment. Residues 310-397 (MGFKASNDYG…FTEAVLHMPG (88 aa)) lie on the Extracellular side of the membrane. Asn-353 carries an N-linked (GlcNAc...) asparagine glycan. A helical membrane pass occupies residues 398–418 (ASVWSVLFFGMLFTLGLSSMF). The Cytoplasmic segment spans residues 419–441 (GNMEGVITPLLDMGILPKGIPKE). Residues 442 to 462 (VMTGVICFACFLSAICFTLQS) traverse the membrane as a helical segment. The Extracellular portion of the chain corresponds to 463 to 472 (GGYWLEIFDS). A helical transmembrane segment spans residues 473–493 (FAASLNLIIFAFMEVVGVIHI). Over 494 to 520 (YGMKRFCDDIEWMTGRRPGLYWQVTWR) the chain is Cytoplasmic. A helical transmembrane segment spans residues 521-541 (VVSPMLLFGIFLSYIVLLIQT). Topologically, residues 542 to 570 (PPSYKAWNPQYEHFPSREEKFYPGWVQVT) are extracellular. A helical transmembrane segment spans residues 571-591 (CVLLSFLPSLWVPGVALAQLL). Over 592 to 615 (SQYKQRWKATHLESGLKLQESRGC) the chain is Cytoplasmic.

The protein belongs to the sodium:neurotransmitter symporter (SNF) (TC 2.A.22) family. SLC6A18 subfamily. Interacts with CLTRN; this interaction regulates the trafficking of SLC6A18 to the cell membrane and its activity. As to expression, expressed predominantly in kidney.

Its subcellular location is the apical cell membrane. The protein resides in the cell membrane. The enzyme catalyses L-alanine(out) + chloride(out) + 2 Na(+)(out) = L-alanine(in) + chloride(in) + 2 Na(+)(in). It catalyses the reaction glycine(out) + chloride(out) + 2 Na(+)(out) = glycine(in) + chloride(in) + 2 Na(+)(in). It carries out the reaction L-methionine(out) + chloride(out) + 2 Na(+)(out) = L-methionine(in) + chloride(in) + 2 Na(+)(in). The catalysed reaction is L-valine(out) + chloride(out) + 2 Na(+)(out) = L-valine(in) + chloride(in) + 2 Na(+)(in). The enzyme catalyses L-isoleucine(out) + chloride(out) + 2 Na(+)(out) = L-isoleucine(in) + chloride(in) + 2 Na(+)(in). It catalyses the reaction L-serine(out) + chloride(out) + 2 Na(+)(out) = L-serine(in) + chloride(in) + 2 Na(+)(in). It carries out the reaction L-leucine(out) + chloride(out) + 2 Na(+)(out) = L-leucine(in) + chloride(in) + 2 Na(+)(in). In terms of biological role, symporter that transports one amino acid molecule together with two sodium and one chloride ions in kidneys and plays a role in the neutral amino acids reabsorption. Preferentially transports neutral amino acids such as L-glycine and L-alanine but also other neutral amino acids. Required CLTRN for cell surface expression and for its amino acid transporter activity. The transport mechanism is pH-independent. The sequence is that of Sodium-dependent neutral amino acid transporter B(0)AT3 from Mus musculus (Mouse).